Consider the following 98-residue polypeptide: NADH-ubiquinone oxidoreductase chain 4L (98 aa).

3 consecutive transmembrane segments (helical) span residues 1-21, 29-49, and 61-81; these read MPFIYINVLLAYFMSLLGLLI, SLLCLEGMMLSLFIMATLMTL, and IVLLVFAACEAAVGLALLVLI.

The protein belongs to the complex I subunit 4L family. In terms of assembly, core subunit of respiratory chain NADH dehydrogenase (Complex I) which is composed of 45 different subunits.

The protein resides in the mitochondrion inner membrane. The enzyme catalyses a ubiquinone + NADH + 5 H(+)(in) = a ubiquinol + NAD(+) + 4 H(+)(out). In terms of biological role, core subunit of the mitochondrial membrane respiratory chain NADH dehydrogenase (Complex I) which catalyzes electron transfer from NADH through the respiratory chain, using ubiquinone as an electron acceptor. Part of the enzyme membrane arm which is embedded in the lipid bilayer and involved in proton translocation. In Aotus trivirgatus (Three-striped night monkey), this protein is NADH-ubiquinone oxidoreductase chain 4L (MT-ND4L).